Reading from the N-terminus, the 306-residue chain is NAD kinase 1 (306 aa).

Asp-67 functions as the Proton acceptor in the catalytic mechanism. Residues 67-68 (DG), 149-150 (NE), and Asp-181 each bind NAD(+).

This sequence belongs to the NAD kinase family. A divalent metal cation serves as cofactor.

It is found in the cytoplasm. It catalyses the reaction NAD(+) + ATP = ADP + NADP(+) + H(+). Its function is as follows. Involved in the regulation of the intracellular balance of NAD and NADP, and is a key enzyme in the biosynthesis of NADP. Catalyzes specifically the phosphorylation on 2'-hydroxyl of the adenosine moiety of NAD to yield NADP. The protein is NAD kinase 1 of Thermosynechococcus vestitus (strain NIES-2133 / IAM M-273 / BP-1).